We begin with the raw amino-acid sequence, 315 residues long: tRNA-dihydrouridine(16) synthase (315 aa).

FMN-binding positions include 7–9 and glutamine 68; that span reads PME. Residue cysteine 98 is the Proton donor of the active site. FMN is bound by residues lysine 139, 200 to 202, and 224 to 225; these read NGE and GR.

It belongs to the Dus family. DusC subfamily. Requires FMN as cofactor.

It carries out the reaction 5,6-dihydrouridine(16) in tRNA + NADP(+) = uridine(16) in tRNA + NADPH + H(+). The catalysed reaction is 5,6-dihydrouridine(16) in tRNA + NAD(+) = uridine(16) in tRNA + NADH + H(+). Catalyzes the synthesis of 5,6-dihydrouridine (D), a modified base found in the D-loop of most tRNAs, via the reduction of the C5-C6 double bond in target uridines. DusC specifically modifies U16 in tRNAs. This is tRNA-dihydrouridine(16) synthase from Escherichia coli (strain K12).